Here is a 945-residue protein sequence, read N- to C-terminus: MKTDELREKYLAFFETKGCVRQPSDVLVPAWDPSVLFTPAGMNQFKDHFLGKVKLDFTRATTCQKCLRTGDIDNVGRTAFHHTFFEMLGNFSFGDYFKEEAIHWAWEFLTDKKWLGIPGERLTVTVYKDDDEAFGIWHDKIGLPTQRISRMDEDENFWPASAPSEGPDGVCGPCSEIYYQLEDGSDVEIWNLVFTQFNRVGTPPDNLHPLPSKNIDTGMGLERTASVLQGVPTNFHIDSLFPIVEAASEVCGVKYEYESDNGRRLRRITDHARASVFAVHENVYPGPKDARSVIRRLIRRAVLDGYQMNLREPFLYKLVEAVADASKAAYPELGQTTQRVSEAIESEEKAFFSTIDGGMKRIHRLFEEMNDEASVMVPGAEAADLLTTYGVPPELVQTLAAEQNFTFDWSGFREAMDKHADESDGGQRVLFQTGPLETLKEALRETPFVGYEQTEATAVVKGIITGDGKGKGDDGQLLSHLDRPEDAVLRLVLDHSPFYGESGGQVGDIGVISNDNFEFEVIDTQRHASMIVHHGRLIRGKINEGETCTAKVDVENRTALARAHSATHILHHALHTHVGRHAEQQGSKVEPDRLRFDFTNPKAIDDETLVKIEQDVLGMVGKGDEIRWDTVSLADAREAGAMMLFGEKYPDPCRMVSMGTFSRELCGGTHLTNTKQVGSFEVVVEESVSTGTRRIEALTGERAKEHREQTQALLNEVAGKLNCDASVAAAATVALIEEVRRLKKELSSGKAADYPAEFVFDAKAAKAETTDISDYNAVRAAVRGLTRRLNVAITDVLSRLDSLLADRSKLVEQLKQVTAGGKISADDLIADGTKVGDTLLIVAETPGANPNIMRGWIDQIRKKSDTPTAVLLASSMNDKVMLVGGLSRDLVDRGLKAGDWVGAAAKVVGGSGGGRPDMAQAGGKDASKLPEALQQARETMTEKLG.

His-564, His-568, Cys-666, and His-670 together coordinate Zn(2+). The segment at 911–945 (SGGGRPDMAQAGGKDASKLPEALQQARETMTEKLG) is disordered.

Belongs to the class-II aminoacyl-tRNA synthetase family. Zn(2+) serves as cofactor.

The protein resides in the cytoplasm. It carries out the reaction tRNA(Ala) + L-alanine + ATP = L-alanyl-tRNA(Ala) + AMP + diphosphate. In terms of biological role, catalyzes the attachment of alanine to tRNA(Ala) in a two-step reaction: alanine is first activated by ATP to form Ala-AMP and then transferred to the acceptor end of tRNA(Ala). Also edits incorrectly charged Ser-tRNA(Ala) and Gly-tRNA(Ala) via its editing domain. This is Alanine--tRNA ligase from Rhodopirellula baltica (strain DSM 10527 / NCIMB 13988 / SH1).